Here is an 821-residue protein sequence, read N- to C-terminus: Condensin-2 complex subunit kle-2 (821 aa).

Residues 389-426 are disordered; it reads VMQNDEPNTSRRPDENYAPMDFDDDFGGGGDDDDDDYI. Residues 409-424 are compositionally biased toward acidic residues; it reads DFDDDFGGGGDDDDDD. The stretch at 529-561 forms a coiled coil; the sequence is TAILAEKKRRIKEKTAKIREARIQNMQRKRTAR.

This sequence belongs to the CND2 H2 (condensin-2 subunit 2) family. As to quaternary structure, component of the condensin II complex, which contains the mix-1/SMC2 and smc-4/SMC4 heterodimer, and three non SMC subunits, capg-2, kle-2 and hcp-6 that probably regulate the complex. Within the complex, interacts with mix-1, smc-4, capg-2 and hcp-6.

It localises to the nucleus. The protein localises to the chromosome. Its subcellular location is the centromere. In terms of biological role, regulatory subunit of the condensin II complex, a complex that seems to play a role in prophase chromosome condensation and in chromosome segregation in mitosis and in meiosis. The sequence is that of Condensin-2 complex subunit kle-2 (kle-2) from Caenorhabditis elegans.